The sequence spans 160 residues: Cytochrome b6-f complex subunit 4 (160 aa).

Helical transmembrane passes span 36-56 (ILYM…GLAI), 95-115 (LLGI…PFIE), and 127-147 (PIAM…GAGA).

Belongs to the cytochrome b family. PetD subfamily. In terms of assembly, the 4 large subunits of the cytochrome b6-f complex are cytochrome b6, subunit IV (17 kDa polypeptide, PetD), cytochrome f and the Rieske protein, while the 4 small subunits are PetG, PetL, PetM and PetN. The complex functions as a dimer.

It localises to the cellular thylakoid membrane. Functionally, component of the cytochrome b6-f complex, which mediates electron transfer between photosystem II (PSII) and photosystem I (PSI), cyclic electron flow around PSI, and state transitions. The chain is Cytochrome b6-f complex subunit 4 from Synechocystis sp. (strain ATCC 27184 / PCC 6803 / Kazusa).